Here is a 1163-residue protein sequence, read N- to C-terminus: Receptor-type guanylate cyclase gcy-21 (1163 aa).

Positions 1-17 (MLSAVLLLLFFIQNVQN) are cleaved as a signal peptide. Topologically, residues 18 to 490 (FDKIELEDIT…ENCGPPANNT (473 aa)) are extracellular. Asparagine 102, asparagine 296, asparagine 322, asparagine 346, asparagine 466, and asparagine 488 each carry an N-linked (GlcNAc...) asparagine glycan. Residues 491-511 (FIIVISVGVAVLIGLAIAAAF) form a helical membrane-spanning segment. At 512–1163 (LYKRYRYERR…QIQEKTYEFS (652 aa)) the chain is on the cytoplasmic side. The Protein kinase domain occupies 587–882 (FNTGSTARAG…QIKRKLKPLT (296 aa)). Residues 593-601 (ARAGPFGPI) and lysine 635 each bind ATP. Residues 901–930 (TDKLEKDIAERNEELEGEKAKSEALLKMML) are a coiled coil. Residues 953-1083 (TVFFSDCPGF…DTVNTASRME (131 aa)) enclose the Guanylate cyclase domain.

This sequence belongs to the adenylyl cyclase class-4/guanylyl cyclase family. As to expression, expressed in ASG sensory neurons.

It localises to the cell membrane. It catalyses the reaction GTP = 3',5'-cyclic GMP + diphosphate. Its function is as follows. Guanylate cyclase involved in the production of the second messenger cGMP. Plays a role in dauer formation. The polypeptide is Receptor-type guanylate cyclase gcy-21 (Caenorhabditis elegans).